Consider the following 302-residue polypeptide: Deoxyhypusine hydroxylase (302 aa).

HEAT-like PBS-type repeat units follow at residues 23–49 (ERFR…AFDD), 54–80 (LKHE…VLKD), 87–113 (VRHE…YKKD), 175–201 (DRYR…GLKD), 206–232 (FRHE…NLED), and 239–265 (VRHE…YADD). The Fe cation site is built by H56, E57, H89, and E90. Positions 208, 209, 241, and 242 each coordinate Fe cation.

Belongs to the deoxyhypusine hydroxylase family. Requires Fe(2+) as cofactor.

The protein localises to the endoplasmic reticulum membrane. The catalysed reaction is [eIF5A protein]-deoxyhypusine + AH2 + O2 = [eIF5A protein]-hypusine + A + H2O. Its pathway is protein modification; eIF5A hypusination. Its function is as follows. Catalyzes the hydroxylation of the N(6)-(4-aminobutyl)-L-lysine intermediate to form hypusine, an essential post-translational modification only found in mature eIF-5A factor. Essential for organismal viability and plays a role in a wide number of important processes such as cell growth and proliferation, and regulates induction of autophagy and protein synthesis. Has a role in eIF-5A-mediated translational control. The polypeptide is Deoxyhypusine hydroxylase (Drosophila pseudoobscura pseudoobscura (Fruit fly)).